Consider the following 363-residue polypeptide: MAPTPPKDRPNRYTYAQAGVDIDAGNELVRMIGPLAASTKRPGSDAALGGFGGLFDLAACGFKDPVLVAANDGVGTKLKVAIEADRHDTVGIDLVAMSVNDLVVQGAEPLFFLDYYATGKLHVDVARDVVAGIAEGCRQAGCALIGGETAEMPGMYAKGDYDLAGFAVGAVERDGVLPRGDVAPGDVLLGLASSGFHSNGFSLVRRIVEDNRISYSAPFPGGDGASIGEVLLAPTRIYVKAMLKTIRETAAVKAVAHITGGGFVENIPRVLPEGINVEIDGASWTMPPVFRWLMELGGIDDTEMGRTFNCGIGMVVVVREDQALEVSDALAEAGETVFRIGRLIETVPGAARVAVKGALGSGK.

Belongs to the AIR synthase family.

Its subcellular location is the cytoplasm. The catalysed reaction is 2-formamido-N(1)-(5-O-phospho-beta-D-ribosyl)acetamidine + ATP = 5-amino-1-(5-phospho-beta-D-ribosyl)imidazole + ADP + phosphate + H(+). It participates in purine metabolism; IMP biosynthesis via de novo pathway; 5-amino-1-(5-phospho-D-ribosyl)imidazole from N(2)-formyl-N(1)-(5-phospho-D-ribosyl)glycinamide: step 2/2. The polypeptide is Phosphoribosylformylglycinamidine cyclo-ligase (Parvibaculum lavamentivorans (strain DS-1 / DSM 13023 / NCIMB 13966)).